The chain runs to 172 residues: Ribosome maturation factor RimM (172 aa).

Positions 96–168 (DGEFYYHEII…RVDVEILEGL (73 aa)) constitute a PRC barrel domain.

The protein belongs to the RimM family. In terms of assembly, binds ribosomal protein uS19.

It localises to the cytoplasm. Its function is as follows. An accessory protein needed during the final step in the assembly of 30S ribosomal subunit, possibly for assembly of the head region. Essential for efficient processing of 16S rRNA. May be needed both before and after RbfA during the maturation of 16S rRNA. It has affinity for free ribosomal 30S subunits but not for 70S ribosomes. The protein is Ribosome maturation factor RimM of Streptococcus pneumoniae serotype 4 (strain ATCC BAA-334 / TIGR4).